The following is a 164-amino-acid chain: S-ribosylhomocysteine lyase (164 aa).

Positions 61, 65, and 131 each coordinate Fe cation.

It belongs to the LuxS family. In terms of assembly, homodimer. Fe cation serves as cofactor.

It catalyses the reaction S-(5-deoxy-D-ribos-5-yl)-L-homocysteine = (S)-4,5-dihydroxypentane-2,3-dione + L-homocysteine. Functionally, involved in the synthesis of autoinducer 2 (AI-2) which is secreted by bacteria and is used to communicate both the cell density and the metabolic potential of the environment. The regulation of gene expression in response to changes in cell density is called quorum sensing. Catalyzes the transformation of S-ribosylhomocysteine (RHC) to homocysteine (HC) and 4,5-dihydroxy-2,3-pentadione (DPD). In Bifidobacterium longum (strain DJO10A), this protein is S-ribosylhomocysteine lyase.